Consider the following 380-residue polypeptide: Anhydro-N-acetylmuramic acid kinase (380 aa).

9 to 16 (GTSADGVD) contributes to the ATP binding site.

It belongs to the anhydro-N-acetylmuramic acid kinase family.

It catalyses the reaction 1,6-anhydro-N-acetyl-beta-muramate + ATP + H2O = N-acetyl-D-muramate 6-phosphate + ADP + H(+). It participates in amino-sugar metabolism; 1,6-anhydro-N-acetylmuramate degradation. It functions in the pathway cell wall biogenesis; peptidoglycan recycling. Functionally, catalyzes the specific phosphorylation of 1,6-anhydro-N-acetylmuramic acid (anhMurNAc) with the simultaneous cleavage of the 1,6-anhydro ring, generating MurNAc-6-P. Is required for the utilization of anhMurNAc either imported from the medium or derived from its own cell wall murein, and thus plays a role in cell wall recycling. This Synechococcus sp. (strain CC9902) protein is Anhydro-N-acetylmuramic acid kinase.